Reading from the N-terminus, the 205-residue chain is Macrophage immunometabolism regulator (205 aa).

Residues 1–40 form a disordered region; it reads MEVDINGVNRTNNSVPSTAEGSSPSKPDPEKPRCSSTPCS. Residues 8–25 show a composition bias toward polar residues; it reads VNRTNNSVPSTAEGSSPS.

The protein belongs to the UNC119-binding protein family. As to quaternary structure, interacts with unc119 family proteins; interaction preferentially takes place when unc119 proteins are unliganded with myristoylated proteins.

It localises to the cytoplasm. It is found in the cell projection. Its subcellular location is the cilium. May play a role in immune regulation through regulation of the macrophage function. May also play a role in trafficking of proteins via its interaction with unc119 family cargo adapters. May play a role in ciliary membrane localization. This is Macrophage immunometabolism regulator (macir) from Xenopus laevis (African clawed frog).